A 245-amino-acid chain; its full sequence is tRNA pseudouridine synthase A 1 (245 aa).

Asp53 functions as the Nucleophile in the catalytic mechanism. A substrate-binding site is contributed by Tyr111.

This sequence belongs to the tRNA pseudouridine synthase TruA family. As to quaternary structure, homodimer.

The enzyme catalyses uridine(38/39/40) in tRNA = pseudouridine(38/39/40) in tRNA. Formation of pseudouridine at positions 38, 39 and 40 in the anticodon stem and loop of transfer RNAs. In Clostridium tetani (strain Massachusetts / E88), this protein is tRNA pseudouridine synthase A 1.